A 376-amino-acid polypeptide reads, in one-letter code: Protein-arginine rhamnosyltransferase (376 aa).

DTDP-beta-L-rhamnose-binding positions include 13–16 (NYGD), Tyr-192, 252–254 (MAQ), and 270–274 (RGEDS). Position 14–15 (14–15 (YG)) interacts with dTDP. Asp-16 acts as the Proton acceptor in catalysis. Residues Tyr-192, 252–254 (MAQ), and 270–274 (RGEDS) each bind dTDP. Residue Glu-272 is part of the active site.

Belongs to the glycosyltransferase 104 family.

The enzyme catalyses dTDP-beta-L-rhamnose + L-arginyl-[protein] = N(omega)-(alpha-L-rhamnosyl)-L-arginyl-[protein] + dTDP + H(+). In terms of biological role, protein-arginine rhamnosyltransferase that catalyzes the transfer of a single rhamnose to elongation factor P (EF-P) on 'Lys-32', a modification required for EF-P-dependent rescue of polyproline stalled ribosomes. The polypeptide is Protein-arginine rhamnosyltransferase (Pseudomonas aeruginosa (strain ATCC 15692 / DSM 22644 / CIP 104116 / JCM 14847 / LMG 12228 / 1C / PRS 101 / PAO1)).